A 237-amino-acid polypeptide reads, in one-letter code: Putative N-acetylmannosamine-6-phosphate 2-epimerase (237 aa).

The protein belongs to the NanE family.

It carries out the reaction an N-acyl-D-glucosamine 6-phosphate = an N-acyl-D-mannosamine 6-phosphate. It functions in the pathway amino-sugar metabolism; N-acetylneuraminate degradation; D-fructose 6-phosphate from N-acetylneuraminate: step 3/5. Functionally, converts N-acetylmannosamine-6-phosphate (ManNAc-6-P) to N-acetylglucosamine-6-phosphate (GlcNAc-6-P). In Caldanaerobacter subterraneus subsp. tengcongensis (strain DSM 15242 / JCM 11007 / NBRC 100824 / MB4) (Thermoanaerobacter tengcongensis), this protein is Putative N-acetylmannosamine-6-phosphate 2-epimerase.